The primary structure comprises 939 residues: Isoleucine--tRNA ligase (939 aa).

Residues 58 to 68 (PYANGDIHIGH) carry the 'HIGH' region motif. Glu-574 serves as a coordination point for L-isoleucyl-5'-AMP. Positions 615 to 619 (KMSKS) match the 'KMSKS' region motif. An ATP-binding site is contributed by Lys-618. Cys-902, Cys-905, Cys-922, and Cys-925 together coordinate Zn(2+).

Belongs to the class-I aminoacyl-tRNA synthetase family. IleS type 1 subfamily. As to quaternary structure, monomer. Zn(2+) is required as a cofactor.

It localises to the cytoplasm. The enzyme catalyses tRNA(Ile) + L-isoleucine + ATP = L-isoleucyl-tRNA(Ile) + AMP + diphosphate. Catalyzes the attachment of isoleucine to tRNA(Ile). As IleRS can inadvertently accommodate and process structurally similar amino acids such as valine, to avoid such errors it has two additional distinct tRNA(Ile)-dependent editing activities. One activity is designated as 'pretransfer' editing and involves the hydrolysis of activated Val-AMP. The other activity is designated 'posttransfer' editing and involves deacylation of mischarged Val-tRNA(Ile). The protein is Isoleucine--tRNA ligase of Aromatoleum aromaticum (strain DSM 19018 / LMG 30748 / EbN1) (Azoarcus sp. (strain EbN1)).